The chain runs to 165 residues: Phosphopantetheine adenylyltransferase (165 aa).

T10 lines the substrate pocket. ATP-binding positions include T10 to F11 and H18. K42, L75, and R89 together coordinate substrate. Residues G90–R92, E100, and Y125–T131 contribute to the ATP site.

The protein belongs to the bacterial CoaD family. In terms of assembly, homohexamer. It depends on Mg(2+) as a cofactor.

The protein localises to the cytoplasm. It catalyses the reaction (R)-4'-phosphopantetheine + ATP + H(+) = 3'-dephospho-CoA + diphosphate. It participates in cofactor biosynthesis; coenzyme A biosynthesis; CoA from (R)-pantothenate: step 4/5. Functionally, reversibly transfers an adenylyl group from ATP to 4'-phosphopantetheine, yielding dephospho-CoA (dPCoA) and pyrophosphate. This chain is Phosphopantetheine adenylyltransferase, found in Chlorobaculum tepidum (strain ATCC 49652 / DSM 12025 / NBRC 103806 / TLS) (Chlorobium tepidum).